We begin with the raw amino-acid sequence, 240 residues long: UDP-2,3-diacylglucosamine hydrolase (240 aa).

Residues Asp-8, His-10, Asp-41, Asn-79, and His-114 each coordinate Mn(2+). 79 to 80 contributes to the substrate binding site; it reads NR. Residues Asp-122, Ser-160, Asn-164, Lys-167, and His-195 each coordinate substrate. Mn(2+) contacts are provided by His-195 and His-197.

This sequence belongs to the LpxH family. It depends on Mn(2+) as a cofactor.

It is found in the cell inner membrane. The enzyme catalyses UDP-2-N,3-O-bis[(3R)-3-hydroxytetradecanoyl]-alpha-D-glucosamine + H2O = 2-N,3-O-bis[(3R)-3-hydroxytetradecanoyl]-alpha-D-glucosaminyl 1-phosphate + UMP + 2 H(+). Its pathway is glycolipid biosynthesis; lipid IV(A) biosynthesis; lipid IV(A) from (3R)-3-hydroxytetradecanoyl-[acyl-carrier-protein] and UDP-N-acetyl-alpha-D-glucosamine: step 4/6. Hydrolyzes the pyrophosphate bond of UDP-2,3-diacylglucosamine to yield 2,3-diacylglucosamine 1-phosphate (lipid X) and UMP by catalyzing the attack of water at the alpha-P atom. Involved in the biosynthesis of lipid A, a phosphorylated glycolipid that anchors the lipopolysaccharide to the outer membrane of the cell. This chain is UDP-2,3-diacylglucosamine hydrolase, found in Salmonella newport (strain SL254).